We begin with the raw amino-acid sequence, 65 residues long: Large ribosomal subunit protein uL30 (65 aa).

Belongs to the universal ribosomal protein uL30 family. Part of the 50S ribosomal subunit.

This Mycobacterium bovis (strain ATCC BAA-935 / AF2122/97) protein is Large ribosomal subunit protein uL30.